Reading from the N-terminus, the 2944-residue chain is Collagen alpha-1(VII) chain (2944 aa).

The N-terminal stretch at 1–16 (MTLRLLVAALCAGILA) is a signal peptide. A nonhelical region (NC1) region spans residues 17 to 1253 (EAPRVRAQHR…PEPCPVYCPK (1237 aa)). In terms of domain architecture, VWFA 1 spans 38 to 211 (DIVFLLDGSS…SILRTLLPLV (174 aa)). Fibronectin type-III domains lie at 234–329 (APRD…TALE), 330–416 (GPEL…TDAS), 417–507 (VEQT…PELP), 510–597 (PVTD…EPET), 600–687 (AVPG…DPLG), 688–775 (PVRT…APEP), 778–866 (RVSR…PPEA), 869–957 (ALGT…SPRV), and 958–1051 (PSIE…CPRG). Asn-337 carries N-linked (GlcNAc...) asparagine glycosylation. The disordered stretch occupies residues 632–651 (STGSGPESSQTLPPDSTATD). A glycan (N-linked (GlcNAc...) asparagine) is linked at Asn-786. Positions 1054–1229 (DVVFLPHATQ…PSLDQAVSGL (176 aa)) constitute a VWFA 2 domain. Asn-1109 carries an N-linked (GlcNAc...) asparagine glycan. Short sequence motifs (cell attachment site) lie at residues 1170–1172 (RGD) and 1334–1336 (RGD). Disordered regions lie at residues 1239–1941 (TTQP…SVPN), 1963–2782 (WDES…EKGE), and 2837–2872 (SHAEEEERVPPEDDEYSEYSEYSVEEYQDPEAPWDS). The tract at residues 1254–1477 (GQKGEPGEMG…GPRGPPGAIG (224 aa)) is interrupted collagenous region. The segment at 1254–2784 (GQKGEPGEMG…GPRGEKGEAA (1531 aa)) is triple-helical region. A compositionally biased stretch (basic and acidic residues) spans 1336 to 1346 (DPGERGPRGPK). Over residues 1355-1365 (VIGGEGPGLPG) the composition is skewed to gly residues. Positions 1399-1408 (KGDKGDRGER) are enriched in basic and acidic residues. The span at 1429 to 1440 (PGSPGPQGPVGP) shows a compositional bias: pro residues. The segment covering 1574–1583 (RGPPGLVLPG) has biased composition (low complexity). Basic and acidic residues-rich tracts occupy residues 1630-1642 (RGRDGEVGEKGDE), 1669-1683 (VGEKGDQGDPGEDGR), and 1715-1733 (AREKGEPGDRGQEGPRGPK). Over residues 1786 to 1802 (KPGAAGPSGPNGAAGKA) the composition is skewed to low complexity. Residues 1852–1877 (EDGRKGEKGDSGASGREGRDGPKGER) show a composition bias toward basic and acidic residues. Pro residues predominate over residues 1886-1897 (QGPPGLPGPVGP). Residues 1898–1911 (PGQGFPGVPGGTGP) are compositionally biased toward gly residues. The span at 1974–1984 (PERRRGPKGDS) shows a compositional bias: basic and acidic residues. The Cell attachment site motif lies at 2008 to 2010 (RGD). A 4-hydroxyproline mark is found at Pro-2036 and Pro-2039. Residues 2046–2055 (GRAGGVGEAG) show a composition bias toward gly residues. A compositionally biased stretch (basic and acidic residues) spans 2056–2074 (RPGERGERGEKGERGEQGR). Residues 2078 to 2092 (PGLPGTPGPPGPPGP) show a composition bias toward pro residues. Pro-2084, Pro-2087, and Pro-2090 each carry 4-hydroxyproline. Residues 2127-2143 (PKGDRGVPGIKGDRGEP) show a composition bias toward basic and acidic residues. 4-hydroxyproline occurs at positions 2167, 2176, 2185, and 2188. Low complexity-rich tracts occupy residues 2191–2206 (PGLAGPAGPQGPSGLK) and 2235–2250 (SGLVGPQGSPGLPGQV). Residues 2328–2346 (AKGDRGLPGPRGEKGEAGR) show a composition bias toward basic and acidic residues. Residues 2387 to 2406 (VKGDLGLPGLPGAPGVVGFP) show a composition bias toward low complexity. Residues 2438–2448 (PLGPPGPPGSV) show a composition bias toward pro residues. Composition is skewed to basic and acidic residues over residues 2471–2486 (RGERGEPGIRGEDGRP) and 2534–2570 (AKGDMGERGPRGLDGDKGPRGDNGDPGDKGSKGEPGD). Positions 2553 to 2555 (RGD) match the Cell attachment site motif. A compositionally biased stretch (low complexity) spans 2573 to 2601 (SAGLPGLRGLLGPQGQPGAAGIPGDPGSP). 5-hydroxylysine; alternate occurs at positions 2625 and 2631. O-linked (Gal...) hydroxylysine; alternate glycosylation is found at Lys-2625 and Lys-2631. 4-hydroxyproline is present on residues Pro-2664, Pro-2667, and Pro-2673. Residues 2704 to 2713 (GTPGIGGFPG) show a composition bias toward gly residues. The span at 2749–2762 (GERVVGAPGVPGAP) shows a compositional bias: low complexity. A nonhelical region (NC2) region spans residues 2785-2944 (LTEDDIRGFV…QSQGTGTAQD (160 aa)). The segment covering 2837-2847 (SHAEEEERVPP) has biased composition (basic and acidic residues). A compositionally biased stretch (acidic residues) spans 2848–2872 (EDDEYSEYSEYSVEEYQDPEAPWDS). Positions 2872–2944 (SDDPCSLPLD…QSQGTGTAQD (73 aa)) constitute a BPTI/Kunitz inhibitor domain. 3 disulfides stabilise this stretch: Cys-2876–Cys-2929, Cys-2885–Cys-2912, and Cys-2904–Cys-2925.

In terms of assembly, homotrimer. Interacts with MIA3/TANGO1; facilitating its loading into transport carriers and subsequent secretion. Post-translationally, prolines at the third position of the tripeptide repeating unit (G-X-Y) are hydroxylated in some or all of the chains.

The protein localises to the secreted. Its subcellular location is the extracellular space. It localises to the extracellular matrix. The protein resides in the basement membrane. Stratified squamous epithelial basement membrane protein that forms anchoring fibrils which may contribute to epithelial basement membrane organization and adherence by interacting with extracellular matrix (ECM) proteins such as type IV collagen. This Homo sapiens (Human) protein is Collagen alpha-1(VII) chain (COL7A1).